The following is a 545-amino-acid chain: Tripartite motif-containing 55 (545 aa).

An RING-type zinc finger spans residues 26-82 (CPICLEMFTKPVVILPCQHNLCRKCASDIFQASNPYLPTRGGTTVASGGRFRCPSCR). Residues 119–161 (LDQPMCEEHEEERINIYCLNCEVPTCSLCKVFGAHKDCQVAPL) form a B box-type zinc finger. 4 residues coordinate Zn(2+): Cys124, His127, Cys147, and His153. The 59-residue stretch at 269-327 (MDEPEMAVFLQNAKTLLQKIVEASKAFQMEKLEQGYEIMSNFTVNLNREEKIIREIDFS) folds into the COS domain. 3 disordered regions span residues 324 to 352 (IDFS…VEVE), 359 to 378 (IASS…SQLP), and 417 to 532 (SQQT…EPAR). Positions 328–352 (REEEEEEDAGEIDEEGEGEDAVEVE) are enriched in acidic residues. Residues 417 to 428 (SQQTTQSETSGP) show a composition bias toward polar residues. Low complexity predominate over residues 474–485 (SSVQSAEVAEAA). The span at 486-506 (TNEQAAVSGKESSSTAATSQI) shows a compositional bias: polar residues.

In terms of processing, targeted for degradation through the proteasomal and lysosomal pathways in the presence of SUMO3. In terms of tissue distribution, widely expressed in various tissues, besides skeletal muscle and heart, such as brain, lung, liver, spleen and kidney.

It localises to the nucleus. The protein localises to the cytoplasm. The enzyme catalyses S-ubiquitinyl-[E2 ubiquitin-conjugating enzyme]-L-cysteine + [acceptor protein]-L-lysine = [E2 ubiquitin-conjugating enzyme]-L-cysteine + N(6)-ubiquitinyl-[acceptor protein]-L-lysine.. E3 ubiquitin ligase that plays an important role in regulating cardiac development and contractility, muscle growth, metabolism, and fiber-type differentiation. Acts as a critical factor that regulates cardiomyocyte size during development in concert with TRIM63 by regulating E2F1-mediated gene expression. Plays a role in apoptosis induction in cardiomyocytes by promoting ubiquitination of the DUSP1 phosphatase. Promotes non-canonical NF-kappa-B signaling and B-cell-mediated immune responses by mediating NFKB2 'Lys-48'-linked ubiquitination and processing. In turn, NFKB2 is further processed by valosin-containing protein/VCP, an ATPase that mediates ubiquitin-dependent protein degradation by the proteasome. May play a role in preventing macrophages from producing inflammatory factors and migrating by downregulating the level of nuclear NF-kappa-B subunit RELA. Modifies also PPARG via polyubiquitination and accelerates PPARG proteasomal degradation to inhibit its activity. The polypeptide is Tripartite motif-containing 55 (Trim55) (Mus musculus (Mouse)).